A 257-amino-acid polypeptide reads, in one-letter code: 1-(5-phosphoribosyl)-5-[(5-phosphoribosylamino)methylideneamino] imidazole-4-carboxamide isomerase (257 aa).

Catalysis depends on Asp-8, which acts as the Proton acceptor. Catalysis depends on Asp-131, which acts as the Proton donor.

Belongs to the HisA/HisF family.

It is found in the cytoplasm. The catalysed reaction is 1-(5-phospho-beta-D-ribosyl)-5-[(5-phospho-beta-D-ribosylamino)methylideneamino]imidazole-4-carboxamide = 5-[(5-phospho-1-deoxy-D-ribulos-1-ylimino)methylamino]-1-(5-phospho-beta-D-ribosyl)imidazole-4-carboxamide. Its pathway is amino-acid biosynthesis; L-histidine biosynthesis; L-histidine from 5-phospho-alpha-D-ribose 1-diphosphate: step 4/9. The chain is 1-(5-phosphoribosyl)-5-[(5-phosphoribosylamino)methylideneamino] imidazole-4-carboxamide isomerase from Nitrosospira multiformis (strain ATCC 25196 / NCIMB 11849 / C 71).